The sequence spans 441 residues: Mannose-6-phosphate isomerase 2 (441 aa).

Zn(2+) is bound by residues Gln-131, His-133, Glu-158, and His-296. Arg-315 is a catalytic residue.

Belongs to the mannose-6-phosphate isomerase type 1 family. It depends on Zn(2+) as a cofactor. Not expressed in any organs under light (at protein level).

The enzyme catalyses D-mannose 6-phosphate = D-fructose 6-phosphate. It participates in nucleotide-sugar biosynthesis; GDP-alpha-D-mannose biosynthesis; alpha-D-mannose 1-phosphate from D-fructose 6-phosphate: step 1/2. Its activity is regulated as follows. Inhibited by EDTA, Zn(2+), Cd(2+), DTT, p-chloromercuribenzoate and L-ascorbic acid (AsA). Its function is as follows. Involved in the synthesis of the GDP-mannose and dolichol-phosphate-mannose required for a number of critical mannosyl transfer reactions. This chain is Mannose-6-phosphate isomerase 2 (PMI2), found in Arabidopsis thaliana (Mouse-ear cress).